A 780-amino-acid polypeptide reads, in one-letter code: Translation initiation factor IF-2 (780 aa).

The tract at residues 44-194 (RQLDNAVDGT…TPPKPKELPE (151 aa)) is disordered. The span at 53 to 65 (TNKKAEAPKKETT) shows a compositional bias: basic and acidic residues. Residues 66 to 81 (SNENGNSKGPNKPNMT) show a composition bias toward polar residues. 2 stretches are compositionally biased toward low complexity: residues 82–93 (NSNEKSNKPNKP) and 117–168 (ANTS…NNKG). The tr-type G domain occupies 281-450 (ERPPVVTIMG…LLVSEVEELK (170 aa)). The interval 290-297 (GHVDHGKT) is G1. A GTP-binding site is contributed by 290-297 (GHVDHGKT). The tract at residues 315 to 319 (GITQH) is G2. The tract at residues 336–339 (DTPG) is G3. Residues 336 to 340 (DTPGH) and 390 to 393 (NKID) contribute to the GTP site. The G4 stretch occupies residues 390–393 (NKID). The segment at 426–428 (SAK) is G5.

This sequence belongs to the TRAFAC class translation factor GTPase superfamily. Classic translation factor GTPase family. IF-2 subfamily.

Its subcellular location is the cytoplasm. Functionally, one of the essential components for the initiation of protein synthesis. Protects formylmethionyl-tRNA from spontaneous hydrolysis and promotes its binding to the 30S ribosomal subunits. Also involved in the hydrolysis of GTP during the formation of the 70S ribosomal complex. This chain is Translation initiation factor IF-2, found in Listeria welshimeri serovar 6b (strain ATCC 35897 / DSM 20650 / CCUG 15529 / CIP 8149 / NCTC 11857 / SLCC 5334 / V8).